The chain runs to 119 residues: Aspartate 1-decarboxylase (119 aa).

Residue Ser25 is the Schiff-base intermediate with substrate; via pyruvic acid of the active site. Ser25 bears the Pyruvic acid (Ser) mark. Thr57 is a substrate binding site. Tyr58 (proton donor) is an active-site residue. Residue 73-75 (GAA) coordinates substrate.

It belongs to the PanD family. As to quaternary structure, heterooctamer of four alpha and four beta subunits. The cofactor is pyruvate. Post-translationally, is synthesized initially as an inactive proenzyme, which is activated by self-cleavage at a specific serine bond to produce a beta-subunit with a hydroxyl group at its C-terminus and an alpha-subunit with a pyruvoyl group at its N-terminus.

It is found in the cytoplasm. The catalysed reaction is L-aspartate + H(+) = beta-alanine + CO2. The protein operates within cofactor biosynthesis; (R)-pantothenate biosynthesis; beta-alanine from L-aspartate: step 1/1. In terms of biological role, catalyzes the pyruvoyl-dependent decarboxylation of aspartate to produce beta-alanine. The polypeptide is Aspartate 1-decarboxylase (Thermosipho melanesiensis (strain DSM 12029 / CIP 104789 / BI429)).